The sequence spans 412 residues: Histone-lysine N-methyltransferase SUV39H1 (412 aa).

Residues 1 to 89 (MAENLKGCSV…LKCIRVLKQF (89 aa)) form an interaction with SIRT1 region. The Chromo domain maps to 43 to 101 (FEVEYLCDYKKIREQEYYLVKWRGYPDSENTWEPRQNLKCIRVLKQFHKDLERELVRRH). Positions 179–240 (VGCECQDCLL…DCPNRVVQKG (62 aa)) constitute a Pre-SET domain. Zn(2+)-binding residues include Cys-181, Cys-183, Cys-186, Cys-194, Cys-195, Cys-222, Cys-226, Cys-228, and Cys-232. The 124-residue stretch at 243–366 (YDLCIFRTND…AGEELTFDYN (124 aa)) folds into the SET domain. Position 254–256 (254–256 (RGW)) interacts with S-adenosyl-L-methionine. The tract at residues 255-377 (GWGVRTLEKI…QVDPVDMEST (123 aa)) is mediates interaction with MECOM. Lys-266 bears the N6-acetyllysine mark. S-adenosyl-L-methionine-binding positions include Tyr-297 and 323 to 324 (NH). Cys-326 contacts Zn(2+). Position 391 is a phosphoserine (Ser-391). One can recognise a Post-SET domain in the interval 396 to 412 (VRIECKCGTTACRKYLF). Residues Cys-400, Cys-402, and Cys-407 each coordinate Zn(2+).

This sequence belongs to the class V-like SAM-binding methyltransferase superfamily. Histone-lysine methyltransferase family. Suvar3-9 subfamily. As to quaternary structure, interacts with CCAR2 and GFI1B. Component of the eNoSC complex, composed of SIRT1, SUV39H1 and RRP8. Interacts with H3 and H4 histones. Interacts with DNMT3B, CBX1, CBX4, MBD1, RUNX1, RUNX3, MYOD1, SMAD5 and RB1. Interacts with SBF1 through the SET domain. Interacts with HDAC1 and HDAC2 through the N-terminus and associates with the core histone deacetylase complex composed of HDAC1, HDAC2, RBBP4 and RBBP7. Interacts (via SET domain) with MECOM; enhances MECOM transcriptional repression activity. Interacts with LMNA; the interaction increases stability of SUV39H1. The large PER complex involved in the histone methylation is composed of at least PER2, CBX3, TRIM28, SUV39H1 and/or SUV39H2; CBX3 mediates the formation of the complex. Post-translationally, phosphorylated on serine residues, and to a lesser degree, on threonine residues. In terms of processing, acetylated at Lys-266, leading to inhibition of enzyme activity. SIRT1-mediated deacetylation relieves this inhibition. Ubiquitinated by the DCX(DCAF13) E3 ubiquitin ligase complex, leading to its degradation. As to expression, widely expressed.

The protein localises to the nucleus. It is found in the nucleus lamina. It localises to the nucleoplasm. The protein resides in the chromosome. Its subcellular location is the centromere. The catalysed reaction is L-lysyl(9)-[histone H3] + 3 S-adenosyl-L-methionine = N(6),N(6),N(6)-trimethyl-L-lysyl(9)-[histone H3] + 3 S-adenosyl-L-homocysteine + 3 H(+). With respect to regulation, negatively regulated by CCAR2. Histone methyltransferase that specifically trimethylates 'Lys-9' of histone H3 using monomethylated H3 'Lys-9' as substrate. H3 'Lys-9' trimethylation represents a specific tag for epigenetic transcriptional repression by recruiting HP1 (CBX1, CBX3 and/or CBX5) proteins to methylated histones. Mainly functions in heterochromatin regions, thereby playing a central role in the establishment of constitutive heterochromatin at pericentric and telomere regions. H3 'Lys-9' trimethylation is also required to direct DNA methylation at pericentric repeats. SUV39H1 is targeted to histone H3 via its interaction with RB1 and is involved in many processes, such as repression of MYOD1-stimulated differentiation, regulation of the control switch for exiting the cell cycle and entering differentiation, repression by the PML-RARA fusion protein, BMP-induced repression, repression of switch recombination to IgA and regulation of telomere length. Component of the eNoSC (energy-dependent nucleolar silencing) complex, a complex that mediates silencing of rDNA in response to intracellular energy status and acts by recruiting histone-modifying enzymes. The eNoSC complex is able to sense the energy status of cell: upon glucose starvation, elevation of NAD(+)/NADP(+) ratio activates SIRT1, leading to histone H3 deacetylation followed by dimethylation of H3 at 'Lys-9' (H3K9me2) by SUV39H1 and the formation of silent chromatin in the rDNA locus. Recruited by the PER complex to the E-box elements of the circadian target genes such as PER2 itself or PER1, contributes to the conversion of local chromatin to a heterochromatin-like repressive state through H3 'Lys-9' trimethylation. The protein is Histone-lysine N-methyltransferase SUV39H1 (Suv39h1) of Mus musculus (Mouse).